The following is a 309-amino-acid chain: THO complex subunit Tho3 (309 aa).

6 WD repeats span residues 22–61, 65–107, 109–148, 192–231, 234–273, and 275–309; these read GQQG…FKFT, GNRG…PIAE, ESNY…IMET, AHNS…CERS, RMDY…QIWK, and PTNG…IFGL.

This sequence belongs to the THOC3 family. As to quaternary structure, component of the transcription/export (TREX) complex, which is at least is formed of SUB2, TEX1 and YRA1 and the THO complex composed of HPR1, MFT1, THO2 and THP1.

It is found in the nucleus. Component of the TREX complex, which operates in coupling transcription elongation to mRNA export. This chain is THO complex subunit Tho3 (THO3), found in Schizosaccharomyces pombe (strain 972 / ATCC 24843) (Fission yeast).